The chain runs to 211 residues: MSVEEVTQKAQALSVGDNEERKTVLTDSKDFDLKHPLNSKWTLWYTKPPVGDNESWSDLLRPVTSFTTVEEFWAIQNAIPKPRELPLKSDYHLFRNDIRPEWEDEANSRGGKWSFQFKVRNPPIDDLWLRALLAVIGESIDEDESEINGVVINVRRSGFKIGLWTKSVRQAPLSKVGAKFKAVLQLDDSDTLEFFAHSSANDKNAKPALVL.

Belongs to the eukaryotic initiation factor 4E family. As to quaternary structure, eIF4F is a multi-subunit complex, the composition of which varies with external and internal environmental conditions. It is composed of at least eIF4A, eIF4E and eIF4G. eIF4E is also known to interact with other partners.

Functionally, recognizes and binds the 7-methylguanosine-containing mRNA cap during an early step in the initiation of protein synthesis and facilitates ribosome binding by inducing the unwinding of the mRNAs secondary structures. This is Eukaryotic translation initiation factor 4E (TIF45) from Eremothecium gossypii (strain ATCC 10895 / CBS 109.51 / FGSC 9923 / NRRL Y-1056) (Yeast).